Here is a 357-residue protein sequence, read N- to C-terminus: tRNA N6-adenosine threonylcarbamoyltransferase (357 aa).

Histidine 116 and histidine 120 together coordinate Fe cation. Substrate contacts are provided by residues 139–143, aspartate 172, glycine 185, and asparagine 284; that span reads LVSGG. Aspartate 312 provides a ligand contact to Fe cation.

The protein belongs to the KAE1 / TsaD family. It depends on Fe(2+) as a cofactor.

The protein localises to the cytoplasm. It catalyses the reaction L-threonylcarbamoyladenylate + adenosine(37) in tRNA = N(6)-L-threonylcarbamoyladenosine(37) in tRNA + AMP + H(+). Its function is as follows. Required for the formation of a threonylcarbamoyl group on adenosine at position 37 (t(6)A37) in tRNAs that read codons beginning with adenine. Is involved in the transfer of the threonylcarbamoyl moiety of threonylcarbamoyl-AMP (TC-AMP) to the N6 group of A37, together with TsaE and TsaB. TsaD likely plays a direct catalytic role in this reaction. This is tRNA N6-adenosine threonylcarbamoyltransferase from Synechococcus sp. (strain CC9902).